The chain runs to 391 residues: Chorismate synthase (391 aa).

Residues R39 and R45 each coordinate NADP(+). Residues 133 to 135 (RAS), 254 to 255 (QA), G299, 314 to 318 (KPIAT), and R340 contribute to the FMN site.

Belongs to the chorismate synthase family. Homotetramer. Requires FMNH2 as cofactor.

It carries out the reaction 5-O-(1-carboxyvinyl)-3-phosphoshikimate = chorismate + phosphate. It participates in metabolic intermediate biosynthesis; chorismate biosynthesis; chorismate from D-erythrose 4-phosphate and phosphoenolpyruvate: step 7/7. Its function is as follows. Catalyzes the anti-1,4-elimination of the C-3 phosphate and the C-6 proR hydrogen from 5-enolpyruvylshikimate-3-phosphate (EPSP) to yield chorismate, which is the branch point compound that serves as the starting substrate for the three terminal pathways of aromatic amino acid biosynthesis. This reaction introduces a second double bond into the aromatic ring system. This is Chorismate synthase from Symbiobacterium thermophilum (strain DSM 24528 / JCM 14929 / IAM 14863 / T).